A 398-amino-acid polypeptide reads, in one-letter code: MSTQAIRGARGLVLKWGAGRFYLDTVLLSVSLGLMLFGFVMVSSASLHLGEKMASDSFYFPKHQLVHILLGLAAGWGAARVRLDTLERHSRSLFWAGIALLVLVLIPGVGKSVNGSVRWINLFGLRVQVSEVFKLVAAIYVAGYISRHLDTVRTSVKGMIFPLSLLAIGAVLLLKEPDFGATAVVMATALGMLFLAGARLWVFVGLLGLVAVAGTVLIYTAEYRLRRVLSFLDPWADPLNSGFQLTQALIAFGRGEWQGVGLGSSVQKLFYLPEAHTDFLFSVIGEELGLWGATTVILLFAIVVWRALAIGRLAERSGNLFAAFLAYGIGIWLGLQSFINMGVNMGMLPTKGLTLPLMSYGGGSMMVVCAAIGLLFRIRSEAVASFLGNGRKGLWPGV.

Residues 1 to 20 lie on the Cytoplasmic side of the membrane; it reads MSTQAIRGARGLVLKWGAGR. Residues 21 to 41 traverse the membrane as a helical segment; that stretch reads FYLDTVLLSVSLGLMLFGFVM. The Periplasmic portion of the chain corresponds to 42–57; that stretch reads VSSASLHLGEKMASDS. The chain crosses the membrane as a helical span at residues 58–78; it reads FYFPKHQLVHILLGLAAGWGA. Residues 79-92 lie on the Cytoplasmic side of the membrane; it reads ARVRLDTLERHSRS. The chain crosses the membrane as a helical span at residues 93 to 113; the sequence is LFWAGIALLVLVLIPGVGKSV. Over 114–121 the chain is Periplasmic; that stretch reads NGSVRWIN. Residues 122-142 traverse the membrane as a helical segment; the sequence is LFGLRVQVSEVFKLVAAIYVA. Over 143 to 153 the chain is Cytoplasmic; it reads GYISRHLDTVR. The helical transmembrane segment at 154-174 threads the bilayer; it reads TSVKGMIFPLSLLAIGAVLLL. Residues 175 to 177 are Periplasmic-facing; sequence KEP. Residues 178 to 198 traverse the membrane as a helical segment; the sequence is DFGATAVVMATALGMLFLAGA. Arginine 199 is a topological domain (cytoplasmic). The chain crosses the membrane as a helical span at residues 200–220; that stretch reads LWVFVGLLGLVAVAGTVLIYT. The Periplasmic segment spans residues 221-289; that stretch reads AEYRLRRVLS…LFSVIGEELG (69 aa). A helical membrane pass occupies residues 290–310; it reads LWGATTVILLFAIVVWRALAI. Topologically, residues 311–318 are cytoplasmic; sequence GRLAERSG. A helical membrane pass occupies residues 319 to 339; it reads NLFAAFLAYGIGIWLGLQSFI. At 340 to 355 the chain is on the periplasmic side; that stretch reads NMGVNMGMLPTKGLTL. A helical transmembrane segment spans residues 356–376; sequence PLMSYGGGSMMVVCAAIGLLF. At 377–398 the chain is on the cytoplasmic side; that stretch reads RIRSEAVASFLGNGRKGLWPGV.

The protein belongs to the SEDS family. FtsW subfamily.

The protein resides in the cell inner membrane. The enzyme catalyses [GlcNAc-(1-&gt;4)-Mur2Ac(oyl-L-Ala-gamma-D-Glu-L-Lys-D-Ala-D-Ala)](n)-di-trans,octa-cis-undecaprenyl diphosphate + beta-D-GlcNAc-(1-&gt;4)-Mur2Ac(oyl-L-Ala-gamma-D-Glu-L-Lys-D-Ala-D-Ala)-di-trans,octa-cis-undecaprenyl diphosphate = [GlcNAc-(1-&gt;4)-Mur2Ac(oyl-L-Ala-gamma-D-Glu-L-Lys-D-Ala-D-Ala)](n+1)-di-trans,octa-cis-undecaprenyl diphosphate + di-trans,octa-cis-undecaprenyl diphosphate + H(+). Its pathway is cell wall biogenesis; peptidoglycan biosynthesis. Its function is as follows. Peptidoglycan polymerase that is essential for cell division. The chain is Probable peptidoglycan glycosyltransferase FtsW from Methylococcus capsulatus (strain ATCC 33009 / NCIMB 11132 / Bath).